A 270-amino-acid polypeptide reads, in one-letter code: 5'-AMP-activated protein kinase subunit beta-1 (270 aa).

The interval 1 to 43 (MGNTSSERAALERQAGHKTPRRDSSGGTKDGDRPKILMDSPED) is disordered. The N-myristoyl glycine moiety is linked to residue G2. Residue T4 is modified to Phosphothreonine. 2 positions are modified to phosphoserine: S5 and S6. Residues 9 to 36 (AALERQAGHKTPRRDSSGGTKDGDRPKI) are compositionally biased toward basic and acidic residues. Phosphothreonine is present on T19. S24 and S25 each carry phosphoserine; by autocatalysis. 3 positions are modified to phosphoserine: S40, S96, and S101. Positions 68–163 (EVNEKAPAQA…QVKKTDFEVF (96 aa)) are glycogen-binding domain. The residue at position 108 (S108) is a Phosphoserine; by autocatalysis. Phosphothreonine is present on T148. A Phosphoserine modification is found at S182. K201 carries the post-translational modification N6-succinyllysine.

The protein belongs to the 5'-AMP-activated protein kinase beta subunit family. AMPK is a heterotrimer of an alpha catalytic subunit (PRKAA1 or PRKAA2), a beta (PRKAB1 or PRKAB2) and a gamma non-catalytic subunits (PRKAG1, PRKAG2 or PRKAG3). Interacts with FNIP1 and FNIP2. In terms of processing, phosphorylated when associated with the catalytic subunit (PRKAA1 or PRKAA2). Phosphorylated by ULK1; leading to negatively regulate AMPK activity and suggesting the existence of a regulatory feedback loop between ULK1 and AMPK. As to expression, highly expressed in kidney, heart, white adipose tissue, lung and spleen.

In terms of biological role, non-catalytic subunit of AMP-activated protein kinase (AMPK), an energy sensor protein kinase that plays a key role in regulating cellular energy metabolism. In response to reduction of intracellular ATP levels, AMPK activates energy-producing pathways and inhibits energy-consuming processes: inhibits protein, carbohydrate and lipid biosynthesis, as well as cell growth and proliferation. AMPK acts via direct phosphorylation of metabolic enzymes, and by longer-term effects via phosphorylation of transcription regulators. Also acts as a regulator of cellular polarity by remodeling the actin cytoskeleton; probably by indirectly activating myosin. Beta non-catalytic subunit acts as a scaffold on which the AMPK complex assembles, via its C-terminus that bridges alpha (PRKAA1 or PRKAA2) and gamma subunits (PRKAG1, PRKAG2 or PRKAG3). This chain is 5'-AMP-activated protein kinase subunit beta-1 (Prkab1), found in Rattus norvegicus (Rat).